Here is a 230-residue protein sequence, read N- to C-terminus: Phosphatidylserine decarboxylase proenzyme (230 aa).

Serine 186 (schiff-base intermediate with substrate; via pyruvic acid) is an active-site residue. Serine 186 bears the Pyruvic acid (Ser); by autocatalysis mark.

It belongs to the phosphatidylserine decarboxylase family. PSD-A subfamily. In terms of assembly, heterodimer of a large membrane-associated beta subunit and a small pyruvoyl-containing alpha subunit. The cofactor is pyruvate. Post-translationally, is synthesized initially as an inactive proenzyme. Formation of the active enzyme involves a self-maturation process in which the active site pyruvoyl group is generated from an internal serine residue via an autocatalytic post-translational modification. Two non-identical subunits are generated from the proenzyme in this reaction, and the pyruvate is formed at the N-terminus of the alpha chain, which is derived from the carboxyl end of the proenzyme. The post-translation cleavage follows an unusual pathway, termed non-hydrolytic serinolysis, in which the side chain hydroxyl group of the serine supplies its oxygen atom to form the C-terminus of the beta chain, while the remainder of the serine residue undergoes an oxidative deamination to produce ammonia and the pyruvoyl prosthetic group on the alpha chain.

The protein localises to the cell membrane. The catalysed reaction is a 1,2-diacyl-sn-glycero-3-phospho-L-serine + H(+) = a 1,2-diacyl-sn-glycero-3-phosphoethanolamine + CO2. It participates in phospholipid metabolism; phosphatidylethanolamine biosynthesis; phosphatidylethanolamine from CDP-diacylglycerol: step 2/2. Catalyzes the formation of phosphatidylethanolamine (PtdEtn) from phosphatidylserine (PtdSer). This is Phosphatidylserine decarboxylase proenzyme from Wolbachia pipientis wMel.